We begin with the raw amino-acid sequence, 250 residues long: Ubiquinone/menaquinone biosynthesis C-methyltransferase UbiE (250 aa).

S-adenosyl-L-methionine is bound by residues T74, D94, 122–123 (DA), and S139.

The protein belongs to the class I-like SAM-binding methyltransferase superfamily. MenG/UbiE family.

It catalyses the reaction a 2-demethylmenaquinol + S-adenosyl-L-methionine = a menaquinol + S-adenosyl-L-homocysteine + H(+). It carries out the reaction a 2-methoxy-6-(all-trans-polyprenyl)benzene-1,4-diol + S-adenosyl-L-methionine = a 5-methoxy-2-methyl-3-(all-trans-polyprenyl)benzene-1,4-diol + S-adenosyl-L-homocysteine + H(+). It participates in quinol/quinone metabolism; menaquinone biosynthesis; menaquinol from 1,4-dihydroxy-2-naphthoate: step 2/2. It functions in the pathway cofactor biosynthesis; ubiquinone biosynthesis. In terms of biological role, methyltransferase required for the conversion of demethylmenaquinol (DMKH2) to menaquinol (MKH2) and the conversion of 2-polyprenyl-6-methoxy-1,4-benzoquinol (DDMQH2) to 2-polyprenyl-3-methyl-6-methoxy-1,4-benzoquinol (DMQH2). This chain is Ubiquinone/menaquinone biosynthesis C-methyltransferase UbiE, found in Cereibacter sphaeroides (strain ATCC 17029 / ATH 2.4.9) (Rhodobacter sphaeroides).